The following is a 560-amino-acid chain: DNA ligase B (560 aa).

The active-site N6-AMP-lysine intermediate is Lys-124.

It belongs to the NAD-dependent DNA ligase family. LigB subfamily.

It catalyses the reaction NAD(+) + (deoxyribonucleotide)n-3'-hydroxyl + 5'-phospho-(deoxyribonucleotide)m = (deoxyribonucleotide)n+m + AMP + beta-nicotinamide D-nucleotide.. Its function is as follows. Catalyzes the formation of phosphodiester linkages between 5'-phosphoryl and 3'-hydroxyl groups in double-stranded DNA using NAD as a coenzyme and as the energy source for the reaction. The chain is DNA ligase B from Escherichia coli O9:H4 (strain HS).